We begin with the raw amino-acid sequence, 105 residues long: Histone H2A-like 1 (105 aa).

This sequence belongs to the histone H2A family. In terms of assembly, the nucleosome is a histone octamer containing two molecules each of H2A, H2B, H3 and H4 assembled in one H3-H4 heterotetramer and two H2A-H2B heterodimers. May be incorporated into a proportion of nucleosomes, replacing one or more H2A molecules. Interacts with H2BC1/TH2B; preferentially dimerizes with H2BC1/TH2B to form nucleosomes. As to expression, testis-specific.

The protein resides in the nucleus. The protein localises to the chromosome. Its function is as follows. Atypical histone H2A which can replace conventional H2A in some nucleosomes and may play a role during spermatogenesis. Nucleosomes wrap and compact DNA into chromatin, limiting DNA accessibility to the cellular machineries which require DNA as a template. Histones thereby play a central role in transcription regulation, DNA repair, DNA replication and chromosomal stability. DNA accessibility is regulated via a complex set of post-translational modifications of histones, also called histone code, and nucleosome remodeling. This Mus musculus (Mouse) protein is Histone H2A-like 1.